The chain runs to 154 residues: Ribonuclease H (154 aa).

An RNase H type-1 domain is found at 7–148 (KPETVEIYTD…ADALAREGIA (142 aa)). Mg(2+) contacts are provided by D16, E54, D76, and D140.

The protein belongs to the RNase H family. Monomer. Mg(2+) serves as cofactor.

It is found in the cytoplasm. It carries out the reaction Endonucleolytic cleavage to 5'-phosphomonoester.. Functionally, endonuclease that specifically degrades the RNA of RNA-DNA hybrids. The sequence is that of Ribonuclease H from Paramagnetospirillum magneticum (strain ATCC 700264 / AMB-1) (Magnetospirillum magneticum).